Reading from the N-terminus, the 246-residue chain is Ribonuclease PH (246 aa).

Phosphate-binding positions include Arg91 and 129-131 (GTR).

The protein belongs to the RNase PH family. Homohexameric ring arranged as a trimer of dimers.

The enzyme catalyses tRNA(n+1) + phosphate = tRNA(n) + a ribonucleoside 5'-diphosphate. In terms of biological role, phosphorolytic 3'-5' exoribonuclease that plays an important role in tRNA 3'-end maturation. Removes nucleotide residues following the 3'-CCA terminus of tRNAs; can also add nucleotides to the ends of RNA molecules by using nucleoside diphosphates as substrates, but this may not be physiologically important. Probably plays a role in initiation of 16S rRNA degradation (leading to ribosome degradation) during starvation. The sequence is that of Ribonuclease PH from Burkholderia cenocepacia (strain ATCC BAA-245 / DSM 16553 / LMG 16656 / NCTC 13227 / J2315 / CF5610) (Burkholderia cepacia (strain J2315)).